A 314-amino-acid polypeptide reads, in one-letter code: Acetaldehyde dehydrogenase 2 (314 aa).

Residue 15–18 coordinates NAD(+); sequence SGNI. The active-site Acyl-thioester intermediate is the C133. Residues 164-172 and N291 each bind NAD(+); that span reads SAGPGTRAN.

The protein belongs to the acetaldehyde dehydrogenase family.

It carries out the reaction acetaldehyde + NAD(+) + CoA = acetyl-CoA + NADH + H(+). The chain is Acetaldehyde dehydrogenase 2 from Pseudomonas putida (strain ATCC 700007 / DSM 6899 / JCM 31910 / BCRC 17059 / LMG 24140 / F1).